Reading from the N-terminus, the 406-residue chain is Bifunctional protein GlmU (406 aa).

The tract at residues 1-221 (MFIILAAGHG…EEEATGINSR (221 aa)) is pyrophosphorylase. Residues 5-8 (LAAG), Lys-19, Gln-68, 73-74 (GT), 98-100 (YGD), Gly-134, Glu-148, Asn-162, and Asn-219 contribute to the UDP-N-acetyl-alpha-D-glucosamine site. Asp-100 is a Mg(2+) binding site. Asn-219 contacts Mg(2+). Residues 222-242 (NDLAKAEFYFQENRRKFFTDS) form a linker region. Residues 243-406 (GVTLVAPETV…RRKQMVKKIK (164 aa)) form an N-acetyltransferase region. Lys-308 is a binding site for UDP-N-acetyl-alpha-D-glucosamine. His-320 (proton acceptor) is an active-site residue. UDP-N-acetyl-alpha-D-glucosamine contacts are provided by Tyr-323 and Asn-334. Acetyl-CoA is bound by residues Ala-337, 343–344 (NY), Ala-380, and Arg-397.

This sequence in the N-terminal section; belongs to the N-acetylglucosamine-1-phosphate uridyltransferase family. It in the C-terminal section; belongs to the transferase hexapeptide repeat family. As to quaternary structure, homotrimer. Requires Mg(2+) as cofactor.

It is found in the cytoplasm. It catalyses the reaction alpha-D-glucosamine 1-phosphate + acetyl-CoA = N-acetyl-alpha-D-glucosamine 1-phosphate + CoA + H(+). The catalysed reaction is N-acetyl-alpha-D-glucosamine 1-phosphate + UTP + H(+) = UDP-N-acetyl-alpha-D-glucosamine + diphosphate. It functions in the pathway nucleotide-sugar biosynthesis; UDP-N-acetyl-alpha-D-glucosamine biosynthesis; N-acetyl-alpha-D-glucosamine 1-phosphate from alpha-D-glucosamine 6-phosphate (route II): step 2/2. It participates in nucleotide-sugar biosynthesis; UDP-N-acetyl-alpha-D-glucosamine biosynthesis; UDP-N-acetyl-alpha-D-glucosamine from N-acetyl-alpha-D-glucosamine 1-phosphate: step 1/1. The protein operates within bacterial outer membrane biogenesis; LPS lipid A biosynthesis. In terms of biological role, catalyzes the last two sequential reactions in the de novo biosynthetic pathway for UDP-N-acetylglucosamine (UDP-GlcNAc). The C-terminal domain catalyzes the transfer of acetyl group from acetyl coenzyme A to glucosamine-1-phosphate (GlcN-1-P) to produce N-acetylglucosamine-1-phosphate (GlcNAc-1-P), which is converted into UDP-GlcNAc by the transfer of uridine 5-monophosphate (from uridine 5-triphosphate), a reaction catalyzed by the N-terminal domain. This Wolbachia sp. subsp. Brugia malayi (strain TRS) protein is Bifunctional protein GlmU.